The sequence spans 276 residues: MAGKKNNNNGQYIILRTPEQQVEIDQRNARRAQMGRMKKARQPVQRYLQQHGLRNGLSGRGGYIVAPTSGGVVTRPIVPKFSNRGDSTIVRNTEILNNQILAALGAFNTTNSALIAAAPSWLASIADLYSKYRWLSCEIIYIPKCPTTTSGSIAMAFTYDRNDAAPTARAQLSQSYKAINFPPYAGYDGAAYLNSNQGAGSAIAVQLDVTKLDKPWYPTISSAGFGALSVLDQNQFCPASLVVASDGGPATATPAGDLFIKYVIEFIEPINPTMNV.

Residues 1–85 (MAGKKNNNNG…PIVPKFSNRG (85 aa)) form a r domain, interaction with RNA region. The s domain, virion shell stretch occupies residues 86-266 (DSTIVRNTEI…DLFIKYVIEF (181 aa)). Positions 267–276 (IEPINPTMNV) are p domain, projecting.

This sequence belongs to the icosahedral plant coat protein family. As to quaternary structure, homomultimer.

The protein localises to the virion. Functionally, capsid protein self-assembles to form an icosahedral capsid with a T=3 symmetry, about 28 nm in diameter, and consisting of 180 capsid proteins. The protein is Capsid protein of Tobacco necrosis virus (strain A) (TNV-A).